The sequence spans 184 residues: Lipid A acyltransferase PagP (184 aa).

The signal sequence occupies residues 1 to 22 (MNIRHGIIAMSSTMLVPLAAEA). Active-site residues include H57, D100, and S101.

The protein belongs to the lipid A palmitoyltransferase family. In terms of assembly, homodimer.

It localises to the cell outer membrane. The catalysed reaction is a lipid A + a 1,2-diacyl-sn-glycero-3-phosphocholine = a hepta-acyl lipid A + a 2-acyl-sn-glycero-3-phosphocholine. It catalyses the reaction a lipid IVA + a 1,2-diacyl-sn-glycero-3-phosphocholine = a lipid IVB + a 2-acyl-sn-glycero-3-phosphocholine. It carries out the reaction a lipid IIA + a 1,2-diacyl-sn-glycero-3-phosphocholine = a lipid IIB + a 2-acyl-sn-glycero-3-phosphocholine. Its function is as follows. Transfers a fatty acid residue from the sn-1 position of a phospholipid to the N-linked hydroxyfatty acid chain on the proximal unit of lipid A or its precursors. This chain is Lipid A acyltransferase PagP, found in Methylobacillus flagellatus (strain ATCC 51484 / DSM 6875 / VKM B-1610 / KT).